Reading from the N-terminus, the 390-residue chain is MAAVAARAGGLLWLRAAGAERRRCGLRCAALVQGFLQPGGEDTAQKRRVAHFTFHPDPESLQYGQTQKMNLFQSITSALDNSLAKDPTAVIFGEDVAFGGVFRCTVGLRDKYGKDRVFNTPLCEQGIVGFGIGIAVTGATAIAEIQFADYIFPAFDQIVNEAAKYRYRSGDLFNCGSLTIRAPWGCVGHGALYHSQSPEAFFAHCPGIKVVIPRSPFQAKGLLLSCIEDKNPCIFFEPKILYRAAVEQVPVEPYKIPLSQAEVIQEGSDVTLVAWGTQVHVIREVASMAQEKLGVSCEVIDLRTIVPWDVDTVCKSVIKTGRLLISHEAPLTGGFASEISSTVQEECFLNLEAPISRVCGYDTPFPHIFEPFYIPDKWKCYDALRKMINY.

Residues 1 to 48 (MAAVAARAGGLLWLRAAGAERRRCGLRCAALVQGFLQPGGEDTAQKRR) constitute a mitochondrion transit peptide. Y150 serves as a coordination point for thiamine diphosphate. K(+) contacts are provided by G176, L178, T179, C226, and D229. K230 is modified (N6-acetyllysine). N231 lines the K(+) pocket. K239 is modified (N6-acetyllysine).

Heterotetramer of 2 alpha/BCKDHA and 2 beta chains/BCKDHB that forms the branched-chain alpha-keto acid decarboxylase (E1) component of the BCKD complex. The branched-chain alpha-ketoacid dehydrogenase is a large complex composed of three major building blocks E1, E2 and E3. It is organized around E2, a 24-meric cubic core composed of DBT, to which are associated 6 to 12 copies of E1, and approximately 6 copies of the dehydrogenase E3, a DLD dimer. Thiamine diphosphate serves as cofactor.

Its subcellular location is the mitochondrion matrix. The enzyme catalyses N(6)-[(R)-lipoyl]-L-lysyl-[protein] + 3-methyl-2-oxobutanoate + H(+) = N(6)-[(R)-S(8)-2-methylpropanoyldihydrolipoyl]-L-lysyl-[protein] + CO2. Functionally, together with BCKDHA forms the heterotetrameric E1 subunit of the mitochondrial branched-chain alpha-ketoacid dehydrogenase (BCKD) complex. The BCKD complex catalyzes the multi-step oxidative decarboxylation of alpha-ketoacids derived from the branched-chain amino-acids valine, leucine and isoleucine producing CO2 and acyl-CoA which is subsequently utilized to produce energy. The E1 subunit catalyzes the first step with the decarboxylation of the alpha-ketoacid forming an enzyme-product intermediate. A reductive acylation mediated by the lipoylamide cofactor of E2 extracts the acyl group from the E1 active site for the next step of the reaction. This Mus musculus (Mouse) protein is 2-oxoisovalerate dehydrogenase subunit beta, mitochondrial.